The sequence spans 85 residues: U4-theraphotoxin-Hhn1ad (85 aa).

The signal sequence occupies residues 1 to 22 (MKVTLIAILTCAAVLVLHTTAA). The propeptide occupies 23 to 48 (EELKTESQLMEVGMPDTELATVDEER). Cystine bridges form between Cys52–Cys66, Cys56–Cys77, and Cys71–Cys82.

This sequence belongs to the neurotoxin 12 (Hwtx-2) family. 02 (Hwtx-2) subfamily. As to expression, expressed by the venom gland.

It is found in the secreted. Functionally, postsynaptic neurotoxin. The sequence is that of U4-theraphotoxin-Hhn1ad from Cyriopagopus hainanus (Chinese bird spider).